Here is a 246-residue protein sequence, read N- to C-terminus: DNA repair protein RecO (246 aa).

The protein belongs to the RecO family.

Involved in DNA repair and RecF pathway recombination. The sequence is that of DNA repair protein RecO from Maridesulfovibrio salexigens (strain ATCC 14822 / DSM 2638 / NCIMB 8403 / VKM B-1763) (Desulfovibrio salexigens).